The primary structure comprises 374 residues: MPGAVEGPRWKQAEDIRDIYDFRDVLGTGAFSEVILAEDKRTQKLVAIKCIAKKALEGKEGSMENEIAVLHKIKHPNIVALDDIYESGGHLYLIMQLVSGGELFDRIVEKGFYTERDASRLIFQVLDAVKYLHDLGIVHRDLKPENLLYYSLDEDSKIMISDFGLSKMEDPGSVLSTACGTPGYVAPEVLAQKPYSKAVDCWSIGVIAYILLCGYPPFYDENDAKLFEQILKAEYEFDSPYWDDISDSAKDFIRHLMEKDPEKRFTCEQALQHPWIAGDTALDKNIHQSVSEQIKKNFAKSKWKQAFNATAVVRHMRKLQLGTSQEGQGQTGSHGELLTPTAGGPAAGCCCRDCCVEPGSELPPAPPPSSRAMD.

Residues 20–276 enclose the Protein kinase domain; the sequence is YDFRDVLGTG…CEQALQHPWI (257 aa). Residues 26–34 and lysine 49 contribute to the ATP site; that span reads LGTGAFSEV. Lysine 59 is covalently cross-linked (Glycyl lysine isopeptide (Lys-Gly) (interchain with G-Cter in ubiquitin)). Aspartate 141 serves as the catalytic Proton acceptor. Threonine 177 bears the Phosphothreonine; by CaMKK1 and CaMKK2 mark. Residues 276 to 316 form an autoinhibitory domain region; it reads IAGDTALDKNIHQSVSEQIKKNFAKSKWKQAFNATAVVRHM. Residues 296 to 317 form a calmodulin-binding region; it reads KNFAKSKWKQAFNATAVVRHMR. Positions 315–321 match the Nuclear export signal motif; the sequence is HMRKLQL.

This sequence belongs to the protein kinase superfamily. CAMK Ser/Thr protein kinase family. CaMK subfamily. Monomer. Interacts with XPO1. Post-translationally, phosphorylated by CaMKK1 and CaMKK2 on Thr-177. In terms of processing, polybiquitinated by the E3 ubiquitin-protein ligase complex SCF(FBXL12), leading to proteasomal degradation. Ubiquitous.

It is found in the cytoplasm. It localises to the nucleus. The catalysed reaction is L-seryl-[protein] + ATP = O-phospho-L-seryl-[protein] + ADP + H(+). It catalyses the reaction L-threonyl-[protein] + ATP = O-phospho-L-threonyl-[protein] + ADP + H(+). With respect to regulation, activated by Ca(2+)/calmodulin. Binding of calmodulin results in conformational change that relieves intrasteric autoinhibition and allows phosphorylation of Thr-177 within the activation loop by CaMKK1 or CaMKK2. Phosphorylation of Thr-177 results in several fold increase in total activity. Unlike CaMK4, is unable to exhibit autonomous activity after Ca(2+)/calmodulin activation. Calcium/calmodulin-dependent protein kinase that operates in the calcium-triggered CaMKK-CaMK1 signaling cascade and, upon calcium influx, regulates transcription activators activity, cell cycle, hormone production, cell differentiation, actin filament organization and neurite outgrowth. Recognizes the substrate consensus sequence [MVLIF]-x-R-x(2)-[ST]-x(3)-[MVLIF]. Regulates axonal extension and growth cone motility in hippocampal and cerebellar nerve cells. Upon NMDA receptor-mediated Ca(2+) elevation, promotes dendritic growth in hippocampal neurons and is essential in synapses for full long-term potentiation (LTP) and ERK2-dependent translational activation. Downstream of NMDA receptors, promotes the formation of spines and synapses in hippocampal neurons by phosphorylating ARHGEF7/BETAPIX on 'Ser-673', which results in the enhancement of ARHGEF7 activity and activation of RAC1. Promotes neuronal differentiation and neurite outgrowth by activation and phosphorylation of MARK2 on 'Ser-91', 'Ser-92', 'Ser-93' and 'Ser-294'. Promotes nuclear export of HDAC5 and binding to 14-3-3 by phosphorylation of 'Ser-259' and 'Ser-498' in the regulation of muscle cell differentiation. Regulates NUMB-mediated endocytosis by phosphorylation of NUMB on 'Ser-276' and 'Ser-295'. Involved in the regulation of basal and estrogen-stimulated migration of medulloblastoma cells through ARHGEF7/BETAPIX phosphorylation. Is required for proper activation of cyclin-D1/CDK4 complex during G1 progression in diploid fibroblasts. Plays a role in K(+) and ANG2-mediated regulation of the aldosterone synthase (CYP11B2) to produce aldosterone in the adrenal cortex. Phosphorylates EIF4G3/eIF4GII. In vitro phosphorylates CREB1, ATF1, CFTR, MYL9 and SYN1/synapsin I. In Mus musculus (Mouse), this protein is Calcium/calmodulin-dependent protein kinase type 1 (Camk1).